Reading from the N-terminus, the 9518-residue chain is Nonribosomal peptide synthetase ungA' (9518 aa).

The tract at residues 214–611 (ERARETPNAP…ARKDDQVKVR (398 aa)) is adenylation 1. The Carrier 1 domain maps to 738 to 814 (APRTEMEWRL…DLAEVARLEQ (77 aa)). Position 775 is an O-(pantetheine 4'-phosphoryl)serine (serine 775). The tract at residues 853-1250 (DLLPCSPLQE…EEVLRQISRE (398 aa)) is condensation 1. Residues 1292-1695 (QRVQEQPDRP…GRKDTQVKIR (404 aa)) are adenylation 2. The region spanning 1822-1898 (LPQTELERRL…RLAHCSQTEQ (77 aa)) is the Carrier 2 domain. The residue at position 1859 (serine 1859) is an O-(pantetheine 4'-phosphoryl)serine. The interval 1911-2336 (TFALSPIQQL…QRSLEVVAKE (426 aa)) is epimerization 1. Residues 2376 to 2803 (EDIYPCSPVQ…DNLQIASSQD (428 aa)) form a condensation 2 region. The segment at 2829–3224 (RIQQQPEAPA…NRKDNQVKIR (396 aa)) is adenylation 3. The Carrier 3 domain occupies 3352 to 3428 (APATASEQRL…DMAQTLKVES (77 aa)). An O-(pantetheine 4'-phosphoryl)serine modification is found at serine 3389. A condensation 3 region spans residues 3465 to 3869 (EDVLPCTPLQ…QVCKEASQYL (405 aa)). The interval 3906–4307 (QQAHQRPNAS…GRRDAQVKIR (402 aa)) is adenylation 4. A Carrier 4 domain is found at 4436-4512 (TPTTITECRI…RLAACTTPVD (77 aa)). O-(pantetheine 4'-phosphoryl)serine is present on serine 4473. Residues 4527–4954 (ALSPIQQLFV…EDAAQELPSL (428 aa)) form an epimerization 2 region. The tract at residues 4990 to 5411 (VEDIYPCSPI…ANLISKEDLR (422 aa)) is condensation 4. The tract at residues 5433–5829 (SEQAQNQPDA…GRKDGQVKIR (397 aa)) is adenylation 5. One can recognise a Carrier 5 domain in the interval 5957 to 6033 (VASSPVELAL…QLAKNSGLQA (77 aa)). Serine 5994 carries the O-(pantetheine 4'-phosphoryl)serine modification. Residues 6050–6470 (ELSPIQRMFF…CEHSLVMAAH (421 aa)) form an epimerization 3 region. The segment at 6512-6856 (VEDIYPCTPI…TGISVQNNAS (345 aa)) is condensation 5. Residues 6947 to 7338 (LRPNSSAIHA…GRKDSQVKVR (392 aa)) are adenylation 6. The Carrier 6 domain maps to 7464–7540 (LPRTEVEMQL…GLAPSAASQA (77 aa)). Serine 7501 is subject to O-(pantetheine 4'-phosphoryl)serine. An epimerization 4 region spans residues 7555-7978 (ELSPIQQMFI…LQTAARELPH (424 aa)). The interval 8016–8444 (VEDIYPLTPI…QVDLAGRHDQ (429 aa)) is condensation 6. Positions 8468-8867 (MQCQQRPDAT…SRKDAQVKIR (400 aa)) are adenylation 7. One can recognise a Carrier 7 domain in the interval 8995–9071 (PLTTEMEWRL…DMAHYLREGQ (77 aa)). Serine 9032 carries the post-translational modification O-(pantetheine 4'-phosphoryl)serine. The segment at 9111–9454 (DVYPTTELQD…DNLEHDAGTS (344 aa)) is condensation 7.

Belongs to the NRP synthetase family.

It functions in the pathway secondary metabolite biosynthesis. In terms of biological role, nonribosomal peptide synthetase; part of the gene cluster that mediates the biosynthesis of the unguisins, gamma-aminobutyric acid (GABA)-containing fungal cyclic heptapeptides with the amino acid sequence cyclo-(D-Ala1-D-Val2-L-Leu3-beta-MePhe4-D-Ala5-D-Trp6-GABA7) for unguisin H and cyclo-(D-Ala1-D-Ala2-L-Leu3-beta-MePhe4-D-Ala5-D-Trp6-GABA7) for unguisin I. UngA' is the main enzyme within the cluster which condenses the 7 residues using its respective 7 modules. The terminal condensation domain (Ct) is involved in cyclization with D-alanine and thereby releasing of unguisins H and I. The alanine racemase ungC' provides D-alanine, which is then accepted by the first adenylation domain of ungA', whereas the methyltransferase ungE' provides the (2R,3R)-beta-methylphenylalanine residue incorporated by the module 4. Finally, the hydrolase ungD' catalyzes the hydrolysis between the D-tryptophan and GABA residues of unguisins H and I to produce the corresponding linear peptides. The protein is Nonribosomal peptide synthetase ungA' of Aspergillus campestris (strain IBT 28561).